Reading from the N-terminus, the 365-residue chain is Fatty acid hydroxylase vlmA (365 aa).

A disordered region spans residues 20–41 (TTIKRRQNDKTKTPKTKPVSKI). N-linked (GlcNAc...) asparagine glycosylation occurs at N47. Helical transmembrane passes span 62–82 (ILLQ…VLSI), 89–109 (VHPF…FRFL), 144–164 (LNWS…LVAY), and 179–199 (WWAW…FYYY). The 147-residue stretch at 189–335 (LYPIILDFYY…TRIWDRLFGT (147 aa)) folds into the Fatty acid hydroxylase domain.

It belongs to the sterol desaturase family. TMEM195 subfamily.

Its subcellular location is the membrane. It participates in secondary metabolite biosynthesis. In terms of biological role, fatty acid hydroxylase; part of the gene cluster that mediates the biosynthesis of verlamelin, a lipopeptide that exhibits antifungal activity against plant pathogenic fungi. Verlamelin is a cyclic hexadepsipeptide and is bridged by ester bonding between a 5-hydroxytetradecanoic acid moiety and a carboxyl group on the terminal Val of amide-bonded tetradecanoyl-hexapeptide D-allo-Thr-D-Ala-L-Pro-L-Gln-D-Tyr-L-Val. VlmA and vlmB are altogether regarded as essential components in the biosynthesis of 5-hydroxytetradecanoic acid. VlmA catalyzes the hydroxylation at position C5 of tetradecanoic acid produced in primary metabolism, while the precise function of vlmB still remains to be solved. To be loaded onto the waiting NRPS, 5-hydroxytetradecanoic acid is activated in the form of acyladenylate by the AMP-dependent ligase vlmC. VlmS seems to accept the fatty-acyl intermediate onto the initial module to further elongate amino acid residues by the downstream modules. In addition, in the last module at its C-terminus, vlmS contains a surplus condensation (C) domain that may be involved in cyclization, the last step to form verlamelin. The chain is Fatty acid hydroxylase vlmA from Lecanicillium sp.